The chain runs to 132 residues: Translation initiation factor 2 subunit beta (132 aa).

Residues 1-30 are disordered; sequence MDYEEQLDRAMDEKPDVTGSETRFEVPDPN.

Belongs to the eIF-2-beta/eIF-5 family. Heterotrimer composed of an alpha, a beta and a gamma chain.

Functionally, eIF-2 functions in the early steps of protein synthesis by forming a ternary complex with GTP and initiator tRNA. In Halobacterium salinarum (strain ATCC 29341 / DSM 671 / R1), this protein is Translation initiation factor 2 subunit beta.